The chain runs to 192 residues: Anthrone oxygenase (192 aa).

Helical transmembrane passes span 12–32 (IVTG…TVPV), 54–74 (GHIS…YIAA), and 86–106 (AALV…VMSS). Asn-130, Asn-138, and Asn-147 each carry an N-linked (GlcNAc...) asparagine glycan. The helical transmembrane segment at 172 to 192 (MHLVRSLFPLMAAVLGVGICV) threads the bilayer.

It belongs to the anthrone oxygenase family.

The protein resides in the membrane. The enzyme catalyses emodin anthrone + O2 = emodin + H2O + H(+). The protein operates within secondary metabolite biosynthesis. Its function is as follows. Anthrone oxygenase; part of the gene cluster that mediates the biosynthesis of monodictyphenone, a prenyl xanthone derivative. The pathway begins with the synthesis of atrochrysone thioester by the polyketide synthase (PKS) mdpG. The atrochrysone carboxyl ACP thioesterase mdpF then breaks the thioester bond and releases the atrochrysone carboxylic acid from mdpG. The atrochrysone carboxylic acid is then converted to atrochrysone which is further transformed into emodin anthrone by mdpH-1 and mdpH-2. Emodin is further modified to yield monodictyphenone via several steps involving mdpB, mdpC mdpJ, mdpK and mdpL. These enzymes with xptA, xptB and xptC are also proposed to be involved in the synthesis of shamixanthone from emodin. Especially, direct reduction of emodin by the short chain dehydrogenase mdpC followed by dehydration catalyzed by the scytalone dehydratase-like protein mdpB gives loss of oxygen and formation of chrysophanol intermediate in two simple steps. This Emericella nidulans (strain FGSC A4 / ATCC 38163 / CBS 112.46 / NRRL 194 / M139) (Aspergillus nidulans) protein is Anthrone oxygenase.